The chain runs to 218 residues: Uracil-DNA glycosylase (218 aa).

Catalysis depends on Asp60, which acts as the Proton acceptor.

The protein belongs to the uracil-DNA glycosylase (UDG) superfamily. UNG family.

It localises to the cytoplasm. It carries out the reaction Hydrolyzes single-stranded DNA or mismatched double-stranded DNA and polynucleotides, releasing free uracil.. Its function is as follows. Excises uracil residues from the DNA which can arise as a result of misincorporation of dUMP residues by DNA polymerase or due to deamination of cytosine. In Francisella philomiragia subsp. philomiragia (strain ATCC 25017 / CCUG 19701 / FSC 153 / O#319-036), this protein is Uracil-DNA glycosylase.